The primary structure comprises 541 residues: Zinc finger protein 513 (541 aa).

Positions 1 to 118 (MPRRKQSHPQ…GEARGERPGP (118 aa)) are disordered. The span at 44–57 (LEFEEEEEEEEGDG) shows a compositional bias: acidic residues. Phosphoserine is present on residues Ser85 and Ser96. Basic and acidic residues predominate over residues 103-115 (EPARGPGEARGER). 8 C2H2-type zinc fingers span residues 150–172 (YSCRLCTFVSHYSSHLKRHMQTH), 178–200 (FRCGRCPYASAQLVNLTRHTRTH), 206–228 (YRCPHCPFACSSLGNLRRHQRTH), 360–382 (FACSLCPFATHYPNHLARHMKTH), 388–410 (FRCARCPYASAHLDNLKRHQRVH), 416–438 (YKCPLCPYACGNLANLKRHGRIH), 444–466 (FRCSLCNYSCNQSMNLKRHMLRH), and 472–494 (FRCATCAYTTGHWDNYKRHQKVH). The interval 492-541 (KVHGHGGAGGPGLSASEGWAPPHSPPSVLSSRGPPALGTAGSRAVHTDSS) is disordered.

It belongs to the krueppel C2H2-type zinc-finger protein family. Binds DNA. Can associate with the proximal promoter regions of PAX6 and SP4, and their known targets including ARR3, RHO, OPN1MW2 and OPN1SW. In terms of tissue distribution, in the retina, expressed in the outer and inner nuclear layers, and the ganglion cell layer.

It is found in the nucleus. Its function is as follows. Transcriptional regulator that plays a role in retinal development and maintenance. In Homo sapiens (Human), this protein is Zinc finger protein 513 (ZNF513).